Here is a 1048-residue protein sequence, read N- to C-terminus: B3 domain-containing protein Os02g0598200 (1048 aa).

The interval 1–345 is disordered; sequence MDGAVRGQGC…QKERVASSDN (345 aa). A compositionally biased stretch (basic residues) spans 16 to 25; that stretch reads SFNKTKKKNR. Composition is skewed to basic and acidic residues over residues 26–134, 151–162, 169–214, 243–253, 281–295, and 332–345; these read NCSD…SDDM, KKNSRNDADEEK, CSDD…GDKK, KNMKSDGDSYK, AKER…MEMK, and LKRE…SSDN. The TF-B3 1 DNA-binding region spans 375 to 468; that stretch reads AFAFFKFVRD…TFSVRVFGID (94 aa). The segment at 505–528 is disordered; sequence QYQDSEDIHDGPNVSGESPRSKEP. Residues 953 to 1048 constitute a DNA-binding region (TF-B3 2); that stretch reads LQFCIPSTIQ…LAFQVYITRK (96 aa).

It is found in the nucleus. This Oryza sativa subsp. japonica (Rice) protein is B3 domain-containing protein Os02g0598200.